The sequence spans 662 residues: MLFIFKNAIREIEQYFANTLSIRRMETREAAERGGERVARYDELLQFIRFCITGENHPIRLPAAPMYLDWIATAELEHGLTPKVENRFLGVVAIDGLPAESWPGILNSLDLMPLTYRWSSRFIFLDAEEARQKLERTRKKWQQKVRPFFDQLFQTQSRSVDRDAMTMVAETEDAIAQASSQLVAYGYYTPVIILFDSDREALQEKAEAIRRLIQAEGFGARIETLNATEAYLGSLPGNWYCNIREPLINTSNLADLIPLNSVWSGSPVAPCPFYPPNSPSLMQVASGSTPFRLNLHVDDVGHTLIFGPTGSGKSTLLALIAAQFRRYDRSQIFAFDKGSALLPLTLAAGGDHYEIGGDNAEGRKALAFCPLSDLESDADRAWAAEWIEMLVALQGVTITPDHRNAMSRQVTLMASAPGRSLSDFVSGVQMREIKDALHHYTVDGPMGQLLDAEHDGLSLGAFQTFEIEQLMNMGERNLVPVLTYLFRRIEKLLDGSPSVIVLDEAWLMLGHPVFRAKIREWLKVLRKANCAVVLATQSISDAERSGIIDVLKESCPTKICLPNGAAREPGTREFYERIGFNERQIEIISNATPKREYYVVTPEGRRLFDMALGPVALSFVGASGKEDLNRIRTLHSEYDRDWPVHWLQMRGFHDAASLFNVE.

An ATP-binding site is contributed by 307-314 (GPTGSGKS).

This sequence belongs to the TrbE/VirB4 family.

The protein is Probable conjugal transfer protein TrbE part 2 (trbEB) of Sinorhizobium fredii (strain NBRC 101917 / NGR234).